A 99-amino-acid polypeptide reads, in one-letter code: Large ribosomal subunit protein bL21 (99 aa).

This sequence belongs to the bacterial ribosomal protein bL21 family. In terms of assembly, part of the 50S ribosomal subunit. Contacts protein L20.

Functionally, this protein binds to 23S rRNA in the presence of protein L20. This Mycoplasmopsis agalactiae (strain NCTC 10123 / CIP 59.7 / PG2) (Mycoplasma agalactiae) protein is Large ribosomal subunit protein bL21.